A 505-amino-acid polypeptide reads, in one-letter code: DEAD-box ATP-dependent RNA helicase 38 (505 aa).

The interval 1-81 is disordered; that stretch reads MADGGKPPTP…DQGPPLLDDS (81 aa). The span at 27–44 shows a compositional bias: low complexity; that stretch reads KAAAAAEAASSSSSNEPA. A Q motif motif is present at residues 100-129; that stretch reads AAFEDLKLTPELLKGLHDEMGFSRPSKIQA. Residues 134–310 enclose the Helicase ATP-binding domain; sequence MILTPPYKDL…TRVIKDGNQI (177 aa). 147–154 contributes to the ATP binding site; the sequence is AHNGSGKT. The DEAD box motif lies at 254–257; sequence DEAD. One can recognise a Helicase C-terminal domain in the interval 338-493; sequence VIKDKIFEFG…EVRNWQSEED (156 aa).

It belongs to the DEAD box helicase family. DDX19/DBP5 subfamily.

The protein resides in the cytoplasm. Its subcellular location is the nucleus. The enzyme catalyses ATP + H2O = ADP + phosphate + H(+). ATP-dependent RNA helicase essential for mRNA export from the nucleus. Plays an important role in the positive regulation of CBF/DREB transcription factors. The chain is DEAD-box ATP-dependent RNA helicase 38 from Oryza sativa subsp. japonica (Rice).